The chain runs to 264 residues: MKQYKDLCRHVLENGEKKGDRTGTGTISTFGYQMRFNLQGGFPMLTTKKLHFKSIAHELLWFLKGDTNVRYLQENGVRIWNEWADENGELGPVYGSQWRSWRGADGETIDQISRLIHDIKTNPNSRRLIVSAWNVGEIDRMALPPCHCLFQFYVADGKLSCQLYQRSADVFLGVPFNIASYALLTMMIAHVTGLEPGEFVHTFGDVHIYQNHVEQVNLQLTRDVRPLPKLRFARNVDSIFDFAFEDFIIEDYDPHPHIKGAVSV.

Position 21 (R21) interacts with dUMP. Residue H51 coordinates (6R)-5,10-methylene-5,6,7,8-tetrahydrofolate. 126–127 (RR) lines the dUMP pocket. The active-site Nucleophile is the C146. DUMP is bound by residues 166–169 (RSAD), N177, and 207–209 (HIY). A (6R)-5,10-methylene-5,6,7,8-tetrahydrofolate-binding site is contributed by D169. S263 lines the (6R)-5,10-methylene-5,6,7,8-tetrahydrofolate pocket.

It belongs to the thymidylate synthase family. Bacterial-type ThyA subfamily. As to quaternary structure, homodimer.

The protein resides in the cytoplasm. It catalyses the reaction dUMP + (6R)-5,10-methylene-5,6,7,8-tetrahydrofolate = 7,8-dihydrofolate + dTMP. It functions in the pathway pyrimidine metabolism; dTTP biosynthesis. Its function is as follows. Catalyzes the reductive methylation of 2'-deoxyuridine-5'-monophosphate (dUMP) to 2'-deoxythymidine-5'-monophosphate (dTMP) while utilizing 5,10-methylenetetrahydrofolate (mTHF) as the methyl donor and reductant in the reaction, yielding dihydrofolate (DHF) as a by-product. This enzymatic reaction provides an intracellular de novo source of dTMP, an essential precursor for DNA biosynthesis. The chain is Thymidylate synthase 2 from Bacillus amyloliquefaciens (Bacillus velezensis).